Reading from the N-terminus, the 160-residue chain is MQISIFAVGRMKVGAEQELVHRYLDRFSKSAGAVGLHFRKMQEVSESRAQTACQRMEEEGKRLFEALPEPSRLIVCDERGKSVSSIAFAEKLAFYRDEGVRDLVIALGGPDGHSEQVRDRADFLLSFGLMTWPHQIARILLTEQLYRTVTIANNHPYHRF.

Residues Gly108 and Phe127–Trp132 each bind S-adenosyl-L-methionine.

Belongs to the RNA methyltransferase RlmH family. Homodimer.

It localises to the cytoplasm. The catalysed reaction is pseudouridine(1915) in 23S rRNA + S-adenosyl-L-methionine = N(3)-methylpseudouridine(1915) in 23S rRNA + S-adenosyl-L-homocysteine + H(+). Specifically methylates the pseudouridine at position 1915 (m3Psi1915) in 23S rRNA. The polypeptide is Ribosomal RNA large subunit methyltransferase H (Bartonella bacilliformis (strain ATCC 35685 / KC583 / Herrer 020/F12,63)).